The sequence spans 989 residues: Cellulose synthase A catalytic subunit 4 [UDP-forming] (989 aa).

Residues 1–184 lie on the Cytoplasmic side of the membrane; sequence MMESGVPPCA…SRIIPISKNK (184 aa). Positions 9, 12, 20, 23, 28, 31, 43, and 46 each coordinate Zn(2+). Residues 9-47 form an RING-type; degenerate zinc finger; it reads CAACGDDAHAACRACSYALCKACLDEDAAEGRTTCARCG. Over residues 138 to 149 the composition is skewed to basic residues; that stretch reads KKEKKASAKKAA. The interval 138 to 158 is disordered; sequence KKEKKASAKKAAAKAQAPPVE. The chain crosses the membrane as a helical span at residues 185–205; that stretch reads LTPYRAVIIMRLVVLGLFFHY. Residues 206–213 lie on the Extracellular side of the membrane; it reads RITNPVYS. Residues 214 to 234 traverse the membrane as a helical segment; sequence AFGLWMTSVICEIWFGFSWIL. Topologically, residues 235–772 are cytoplasmic; that stretch reads DQFPKWCPIN…INTIVYPFTS (538 aa). 4 residues coordinate UDP-alpha-D-glucose: Ser-272, Lys-278, Glu-279, and Asp-308. The active site involves Asp-308. A coiled-coil region spans residues 362 to 389; the sequence is VKERRAMKRDYEEYKVRINALVAKAQKT. Lys-449 is a UDP-alpha-D-glucose binding site. The Mn(2+) site is built by Lys-450 and Asp-474. Asp-688 is a catalytic residue. The chain crosses the membrane as a helical span at residues 773 to 793; the sequence is LPLIAYCCLPAICLLTGKFII. The Extracellular segment spans residues 794 to 798; it reads PTLSN. Residues 799 to 819 traverse the membrane as a helical segment; sequence AATIWFLGLFISIIVTSVLEL. The Cytoplasmic segment spans residues 820–835; sequence RWSGIGIEDWWRNEQF. The chain crosses the membrane as a helical span at residues 836-856; sequence WVIGGVSAHLFAVFQGILKMI. Residues 857–884 are Extracellular-facing; the sequence is AGLDTNFTVTAKATDDTEFGELYVFKWT. Asn-862 carries an N-linked (GlcNAc...) asparagine glycan. The helical transmembrane segment at 885–905 threads the bilayer; that stretch reads TVLIPPTSILVLNLVGVVAGF. At 906-916 the chain is on the cytoplasmic side; sequence SDALNSGYESW. The helical transmembrane segment at 917–937 threads the bilayer; it reads GPLFGKVFFAMWVIMHLYPFL. The Extracellular portion of the chain corresponds to 938–946; that stretch reads KGLMGRQNR. A helical membrane pass occupies residues 947-967; the sequence is TPTIVVLWSVLLASVFSLLWV. The Cytoplasmic portion of the chain corresponds to 968–989; that stretch reads KIDPFIGSSETTTTNSCANFDC.

It belongs to the glycosyltransferase 2 family. Plant cellulose synthase subfamily. Mn(2+) is required as a cofactor. Requires Zn(2+) as cofactor.

Its subcellular location is the cell membrane. The enzyme catalyses [(1-&gt;4)-beta-D-glucosyl](n) + UDP-alpha-D-glucose = [(1-&gt;4)-beta-D-glucosyl](n+1) + UDP + H(+). It participates in glycan metabolism; plant cellulose biosynthesis. In terms of biological role, catalytic subunit of cellulose synthase terminal complexes ('rosettes'), required for beta-1,4-glucan microfibril crystallization, a major mechanism of the cell wall formation. Involved in the secondary cell wall formation. In Oryza sativa subsp. japonica (Rice), this protein is Cellulose synthase A catalytic subunit 4 [UDP-forming] (CESA4).